The chain runs to 196 residues: MKRIEEKEKAIMDEIMEMHALAEKAVELSFRAMRGDKSVVREISRIEQQTDVLDTDINYACTTFIALFQPVARDLRFAISIMRISSSYERIADIAQEISLYESKLPEIVFKAEKYLKKMFDAVKEGYTKTEGLKERMTELDNAVDEIYVEAIEQLEESCDVNAVLTVRHIERIGDLLAKIAARQIFIKEGRRVWII.

It belongs to the PhoU family. Homodimer.

It is found in the cytoplasm. Its function is as follows. Plays a role in the regulation of phosphate uptake. The polypeptide is Phosphate-specific transport system accessory protein PhoU homolog (Archaeoglobus fulgidus (strain ATCC 49558 / DSM 4304 / JCM 9628 / NBRC 100126 / VC-16)).